The primary structure comprises 385 residues: Protein pelota homolog (385 aa).

Residue K162 forms a Glycyl lysine isopeptide (Lys-Gly) (interchain with G-Cter in SUMO2) linkage. Phosphoserine occurs at positions 374, 380, 381, and 382.

Belongs to the eukaryotic release factor 1 family. Pelota subfamily. Component of the Pelota-HBS1L complex, also named Dom34-Hbs1 complex, composed of PELO and HBS1L. Interacts with PINK1. Interacts with ABCE1. Interacts with CNOT4. A divalent metal cation serves as cofactor.

It is found in the cytoplasm. Component of the Pelota-HBS1L complex, a complex that recognizes stalled ribosomes and triggers the No-Go Decay (NGD) pathway. In the Pelota-HBS1L complex, PELO recognizes ribosomes stalled at the 3' end of an mRNA and engages stalled ribosomes by destabilizing mRNA in the mRNA channel. Following mRNA extraction from stalled ribosomes by the SKI complex, the Pelota-HBS1L complex promotes recruitment of ABCE1, which drives the disassembly of stalled ribosomes, followed by degradation of damaged mRNAs as part of the NGD pathway. As part of the PINK1-regulated signaling, upon mitochondrial damage is recruited to the ribosome/mRNA-ribonucleoprotein complex associated to mitochondrial outer membrane thereby enabling the recruitment of autophagy receptors and induction of mitophagy. This is Protein pelota homolog (PELO) from Bos taurus (Bovine).